The chain runs to 233 residues: Purine nucleoside phosphorylase DeoD-type (233 aa).

Histidine 4 contributes to the a purine D-ribonucleoside binding site. Residues glycine 20, arginine 24, arginine 43, and 87–90 (RIGT) each bind phosphate. A purine D-ribonucleoside is bound by residues 179–181 (EME) and 203–204 (SD). The active-site Proton donor is aspartate 204.

Belongs to the PNP/UDP phosphorylase family. In terms of assembly, homohexamer; trimer of homodimers.

The catalysed reaction is a purine D-ribonucleoside + phosphate = a purine nucleobase + alpha-D-ribose 1-phosphate. It carries out the reaction a purine 2'-deoxy-D-ribonucleoside + phosphate = a purine nucleobase + 2-deoxy-alpha-D-ribose 1-phosphate. Functionally, catalyzes the reversible phosphorolytic breakdown of the N-glycosidic bond in the beta-(deoxy)ribonucleoside molecules, with the formation of the corresponding free purine bases and pentose-1-phosphate. In Helicobacter pylori (strain P12), this protein is Purine nucleoside phosphorylase DeoD-type.